Consider the following 224-residue polypeptide: 7-cyano-7-deazaguanine synthase (224 aa).

10–20 (LSGGLDSATVV) is an ATP binding site. Residues Cys189, Cys199, Cys202, and Cys205 each coordinate Zn(2+).

This sequence belongs to the QueC family. It depends on Zn(2+) as a cofactor.

The catalysed reaction is 7-carboxy-7-deazaguanine + NH4(+) + ATP = 7-cyano-7-deazaguanine + ADP + phosphate + H2O + H(+). The protein operates within purine metabolism; 7-cyano-7-deazaguanine biosynthesis. Its function is as follows. Catalyzes the ATP-dependent conversion of 7-carboxy-7-deazaguanine (CDG) to 7-cyano-7-deazaguanine (preQ(0)). The sequence is that of 7-cyano-7-deazaguanine synthase from Ectopseudomonas mendocina (strain ymp) (Pseudomonas mendocina).